The chain runs to 314 residues: Dihydroorotate dehydrogenase (fumarate) (314 aa).

FMN contacts are provided by residues A21 and 45–46 (KS). Residues K45, 69–73 (NSMGL), and N129 each bind substrate. FMN is bound at residue N129. C132 functions as the Nucleophile in the catalytic mechanism. N134 contacts substrate. 2 residues coordinate FMN: K166 and V195. Residue 196–197 (NS) coordinates substrate. FMN contacts are provided by residues G224, 251–252 (GG), and 273–274 (GT).

The protein belongs to the dihydroorotate dehydrogenase family. Type 1 subfamily. Homodimer. FMN is required as a cofactor.

It is found in the cytoplasm. The catalysed reaction is (S)-dihydroorotate + fumarate = orotate + succinate. The protein operates within pyrimidine metabolism; UMP biosynthesis via de novo pathway. Catalyzes the conversion of dihydroorotate to orotate with fumarate as the electron acceptor. Molecular oxygen can replace fumarate in vitro. The sequence is that of Dihydroorotate dehydrogenase (fumarate) (pyr4) from Trypanosoma cruzi (strain CL Brener).